The following is a 420-amino-acid chain: Serine hydroxymethyltransferase (420 aa).

(6S)-5,6,7,8-tetrahydrofolate-binding positions include L121 and 125–127 (GHL). An N6-(pyridoxal phosphate)lysine modification is found at K230. (6S)-5,6,7,8-tetrahydrofolate-binding positions include E246 and 354 to 356 (SPF).

Belongs to the SHMT family. Homodimer. Pyridoxal 5'-phosphate is required as a cofactor.

It is found in the cytoplasm. It catalyses the reaction (6R)-5,10-methylene-5,6,7,8-tetrahydrofolate + glycine + H2O = (6S)-5,6,7,8-tetrahydrofolate + L-serine. It functions in the pathway one-carbon metabolism; tetrahydrofolate interconversion. The protein operates within amino-acid biosynthesis; glycine biosynthesis; glycine from L-serine: step 1/1. Its function is as follows. Catalyzes the reversible interconversion of serine and glycine with tetrahydrofolate (THF) serving as the one-carbon carrier. This reaction serves as the major source of one-carbon groups required for the biosynthesis of purines, thymidylate, methionine, and other important biomolecules. Also exhibits THF-independent aldolase activity toward beta-hydroxyamino acids, producing glycine and aldehydes, via a retro-aldol mechanism. In Rickettsia typhi (strain ATCC VR-144 / Wilmington), this protein is Serine hydroxymethyltransferase.